Here is a 352-residue protein sequence, read N- to C-terminus: Transcription factor BHLH156 (352 aa).

A disordered region spans residues 59–141 (GGDDDDNGGV…RSKTIVSERK (83 aa)). Positions 130-143 (RDRSKTIVSERKRR) are basic motif. The region spanning 130–179 (RDRSKTIVSERKRRVRMKEKLYELRALVPNITKMDKASIIADAVVYVKDL) is the bHLH domain. Positions 144–179 (VRMKEKLYELRALVPNITKMDKASIIADAVVYVKDL) are helix-loop-helix motif. Residues 194-216 (EEARPIRPPPPSAAAQRPQRQPR) are disordered. Residues 206–216 (AAAQRPQRQPR) are compositionally biased toward low complexity.

It belongs to the bHLH protein family. As to quaternary structure, forms homodimers. Interacts with IRO2 in the nucleus. In terms of tissue distribution, expressed in the meristematic zone of lateral and primary roots.

The protein resides in the nucleus. Its function is as follows. Transcription factor involved in positive regulation of genes involved in strategy II iron acquisition, including genes for mugineic acid (MA) family phytosiderophores biosynthesis, and genes involved in S-adenosylmethionine cycle and iron transport. May play a role in the regulation of iron deficiency response by promoting the nuclear localization of IRO2. Possesses transactivation activity in yeast. The chain is Transcription factor BHLH156 from Oryza sativa subsp. japonica (Rice).